A 129-amino-acid chain; its full sequence is Protachykinin-1 (129 aa).

The signal sequence occupies residues 1-19; it reads MKILVALAVFFLVSTQLFA. A propeptide spanning residues 20–56 is cleaved from the precursor; the sequence is EEIGANDDLNYWSDWYDSDQIKEELPEPFEHLLQRIA. Methionine 68 and methionine 107 each carry methionine amide.

It belongs to the tachykinin family. In terms of processing, the substance P form is cleaved at Pro-59 by the prolyl endopeptidase FAP (seprase) activity (in vitro). Substance P is also cleaved and degraded by Angiotensin-converting enzyme (ACE) and neprilysin (MME).

Its subcellular location is the secreted. Functionally, tachykinins are active peptides which excite neurons, evoke behavioral responses, are potent vasodilators and secretagogues, and contract (directly or indirectly) many smooth muscles. This chain is Protachykinin-1 (TAC1), found in Homo sapiens (Human).